The following is a 316-amino-acid chain: Methionyl-tRNA formyltransferase (316 aa).

112–115 (SLLP) is a (6S)-5,6,7,8-tetrahydrofolate binding site.

The protein belongs to the Fmt family.

The catalysed reaction is L-methionyl-tRNA(fMet) + (6R)-10-formyltetrahydrofolate = N-formyl-L-methionyl-tRNA(fMet) + (6S)-5,6,7,8-tetrahydrofolate + H(+). Attaches a formyl group to the free amino group of methionyl-tRNA(fMet). The formyl group appears to play a dual role in the initiator identity of N-formylmethionyl-tRNA by promoting its recognition by IF2 and preventing the misappropriation of this tRNA by the elongation apparatus. This chain is Methionyl-tRNA formyltransferase, found in Actinobacillus pleuropneumoniae serotype 7 (strain AP76).